The chain runs to 175 residues: ATP synthase subunit delta (175 aa).

It belongs to the ATPase delta chain family. In terms of assembly, F-type ATPases have 2 components, F(1) - the catalytic core - and F(0) - the membrane proton channel. F(1) has five subunits: alpha(3), beta(3), gamma(1), delta(1), epsilon(1). F(0) has three main subunits: a(1), b(2) and c(10-14). The alpha and beta chains form an alternating ring which encloses part of the gamma chain. F(1) is attached to F(0) by a central stalk formed by the gamma and epsilon chains, while a peripheral stalk is formed by the delta and b chains.

The protein resides in the cell inner membrane. Its function is as follows. F(1)F(0) ATP synthase produces ATP from ADP in the presence of a proton or sodium gradient. F-type ATPases consist of two structural domains, F(1) containing the extramembraneous catalytic core and F(0) containing the membrane proton channel, linked together by a central stalk and a peripheral stalk. During catalysis, ATP synthesis in the catalytic domain of F(1) is coupled via a rotary mechanism of the central stalk subunits to proton translocation. This protein is part of the stalk that links CF(0) to CF(1). It either transmits conformational changes from CF(0) to CF(1) or is implicated in proton conduction. This is ATP synthase subunit delta from Xanthomonas axonopodis pv. citri (strain 306).